Here is a 192-residue protein sequence, read N- to C-terminus: Orotate phosphoribosyltransferase (192 aa).

116-124 (EDIVTTGLS) serves as a coordination point for 5-phospho-alpha-D-ribose 1-diphosphate. Orotate is bound by residues T120 and R148.

It belongs to the purine/pyrimidine phosphoribosyltransferase family. PyrE subfamily. Homodimer. Requires Mg(2+) as cofactor.

The enzyme catalyses orotidine 5'-phosphate + diphosphate = orotate + 5-phospho-alpha-D-ribose 1-diphosphate. It functions in the pathway pyrimidine metabolism; UMP biosynthesis via de novo pathway; UMP from orotate: step 1/2. Functionally, catalyzes the transfer of a ribosyl phosphate group from 5-phosphoribose 1-diphosphate to orotate, leading to the formation of orotidine monophosphate (OMP). This Brucella abortus (strain S19) protein is Orotate phosphoribosyltransferase.